The primary structure comprises 85 residues: Alpha-toxin BmalphaTx47 (85 aa).

The signal sequence occupies residues 1 to 19 (MNYLIVISFALLLMTGVQS). The region spanning 21 to 83 (RDAYIADSEN…VPIRISGSCR (63 aa)) is the LCN-type CS-alpha/beta domain. 4 cysteine pairs are disulfide-bonded: Cys-31-Cys-82, Cys-35-Cys-55, Cys-41-Cys-65, and Cys-45-Cys-67.

This sequence belongs to the long (4 C-C) scorpion toxin superfamily. Sodium channel inhibitor family. Alpha subfamily. Expressed by the venom gland.

It localises to the secreted. In terms of biological role, alpha toxins bind voltage-independently at site-3 of sodium channels (Nav) and inhibit the inactivation of the activated channels, thereby blocking neuronal transmission. This toxin expressed with the pET-14b vector has low inhibitory activity on sodium channels (11.33% on rNav1.2/SCN2A, 15.96% on mNav1.4/SCN4A and 5.04% on hNav1.5/SCN5A). When expressed with the pET-28a vector, this toxin has higher inhibitory activities (44.12% on rNav1.2/SCN2A, 25.40% on mNav1.4/SCN4A and 65.34% on hNav1.5/SCN5A). The sequence is that of Alpha-toxin BmalphaTx47 from Olivierus martensii (Manchurian scorpion).